We begin with the raw amino-acid sequence, 340 residues long: tRNA N6-adenosine threonylcarbamoyltransferase (340 aa).

Positions 111 and 115 each coordinate Fe cation. Substrate is bound by residues 134–138 (LVSGG), Asp167, Gly180, and Asn276. A Fe cation-binding site is contributed by Asp304.

Belongs to the KAE1 / TsaD family. Requires Fe(2+) as cofactor.

It is found in the cytoplasm. It carries out the reaction L-threonylcarbamoyladenylate + adenosine(37) in tRNA = N(6)-L-threonylcarbamoyladenosine(37) in tRNA + AMP + H(+). Functionally, required for the formation of a threonylcarbamoyl group on adenosine at position 37 (t(6)A37) in tRNAs that read codons beginning with adenine. Is involved in the transfer of the threonylcarbamoyl moiety of threonylcarbamoyl-AMP (TC-AMP) to the N6 group of A37, together with TsaE and TsaB. TsaD likely plays a direct catalytic role in this reaction. The protein is tRNA N6-adenosine threonylcarbamoyltransferase of Helicobacter pylori (strain ATCC 700392 / 26695) (Campylobacter pylori).